The chain runs to 202 residues: Dephospho-CoA kinase (202 aa).

Positions 5 to 202 constitute a DPCK domain; it reads IVGLTGGIAS…DADYRARSDR (198 aa). 13–18 contacts ATP; it reads ASGKSA.

The protein belongs to the CoaE family.

Its subcellular location is the cytoplasm. The enzyme catalyses 3'-dephospho-CoA + ATP = ADP + CoA + H(+). Its pathway is cofactor biosynthesis; coenzyme A biosynthesis; CoA from (R)-pantothenate: step 5/5. In terms of biological role, catalyzes the phosphorylation of the 3'-hydroxyl group of dephosphocoenzyme A to form coenzyme A. The chain is Dephospho-CoA kinase from Xanthomonas oryzae pv. oryzae (strain MAFF 311018).